Reading from the N-terminus, the 473-residue chain is FAD-dependent oxidoreductase dpasF (473 aa).

A signal peptide spans 1 to 21; that stretch reads MNRLLASALLVGSAVVAPVSA. N-linked (GlcNAc...) asparagine glycosylation is found at asparagine 26, asparagine 54, asparagine 92, asparagine 133, asparagine 185, asparagine 276, and asparagine 401.

The protein belongs to the beta-cyclopiazonate dehydrogenase family. It depends on FAD as a cofactor.

It functions in the pathway secondary metabolite biosynthesis; terpenoid biosynthesis. FAD-dependent oxidoreductase; part of the gene cluster that mediates the biosynthesis of the diterpenoid pyrones subglutinols A and B. The first step of the pathway is the synthesis of the alpha-pyrone moiety by the polyketide synthase dpasA via condensation of one acetyl-CoA starter unit with 3 malonyl-CoA units and 2 methylations. The alpha-pyrone is then combined with geranylgeranyl pyrophosphate (GGPP) formed by the GGPP synthase dpasD through the action of the prenyltransferase dpasC to yield a linear alpha-pyrone diterpenoid. Subsequent steps in the diterpenoid pyrone biosynthetic pathway involve the decalin core formation, which is initiated by the epoxidation of the C10-C11 olefin by the FAD-dependent oxidoreductase dpasE, and is followed by a cyclization cascade catalyzed by the terpene cyclase dpasB. The FAD-linked oxidoreductase dpasF is then involved in tetrahydrofuran (THF) ring formation at the C5 unit to complete the formation of subglutinols A and B. DpasF possesses also an additional catalytic ability of multi-step oxidations to generate a new DDP analog with an enone system at the C5 named FDDP A. This is FAD-dependent oxidoreductase dpasF from Apiospora sacchari (Arthrinium sacchari).